Consider the following 547-residue polypeptide: Chaperonin GroEL (547 aa).

ATP contacts are provided by residues 30–33 (TLGP), Lys-51, 87–91 (DGTTT), Gly-415, 479–481 (NAA), and Asp-495. The tract at residues 524-547 (APKKDEPTPPAAGGGMGGMGGMDF) is disordered. Gly residues predominate over residues 535 to 547 (AGGGMGGMGGMDF).

Belongs to the chaperonin (HSP60) family. Forms a cylinder of 14 subunits composed of two heptameric rings stacked back-to-back. Interacts with the co-chaperonin GroES.

Its subcellular location is the cytoplasm. The catalysed reaction is ATP + H2O + a folded polypeptide = ADP + phosphate + an unfolded polypeptide.. In terms of biological role, together with its co-chaperonin GroES, plays an essential role in assisting protein folding. The GroEL-GroES system forms a nano-cage that allows encapsulation of the non-native substrate proteins and provides a physical environment optimized to promote and accelerate protein folding. The protein is Chaperonin GroEL of Xylella fastidiosa (strain M23).